A 546-amino-acid chain; its full sequence is Chromosomal replication initiator protein DnaA (546 aa).

The interval 1–85 (MSDPQAALRA…TRALSQHMGR (85 aa)) is domain I, interacts with DnaA modulators. The segment at 85–204 (RPCSLAVTIA…EPAHNPNREK (120 aa)) is domain II. Pro residues predominate over residues 96 to 111 (PPQPAPQEEPPAPAPQ). Residues 96–209 (PPQPAPQEEP…PNREKSLNPK (114 aa)) form a disordered region. The segment covering 126 to 145 (QTQAFQQPTQSTQPAPASQP) has biased composition (low complexity). Over residues 191–209 (IPREEPAHNPNREKSLNPK) the composition is skewed to basic and acidic residues. The tract at residues 205 to 421 (SLNPKHTFEN…GALIRVSAYS (217 aa)) is domain III, AAA+ region. ATP contacts are provided by Gly-249, Gly-251, Lys-252, and Thr-253. The interval 422–546 (SLVNEPISLE…TQRVKNHNQR (125 aa)) is domain IV, binds dsDNA.

The protein belongs to the DnaA family. Oligomerizes as a right-handed, spiral filament on DNA at oriC.

It localises to the cytoplasm. Plays an essential role in the initiation and regulation of chromosomal replication. ATP-DnaA binds to the origin of replication (oriC) to initiate formation of the DNA replication initiation complex once per cell cycle. Binds the DnaA box (a 9 base pair repeat at the origin) and separates the double-stranded (ds)DNA. Forms a right-handed helical filament on oriC DNA; dsDNA binds to the exterior of the filament while single-stranded (ss)DNA is stabiized in the filament's interior. The ATP-DnaA-oriC complex binds and stabilizes one strand of the AT-rich DNA unwinding element (DUE), permitting loading of DNA polymerase. After initiation quickly degrades to an ADP-DnaA complex that is not apt for DNA replication. Binds acidic phospholipids. This is Chromosomal replication initiator protein DnaA from Corynebacterium aurimucosum (strain ATCC 700975 / DSM 44827 / CIP 107346 / CN-1) (Corynebacterium nigricans).